We begin with the raw amino-acid sequence, 188 residues long: Large ribosomal subunit protein eL18 (188 aa).

Residue K119 forms a Glycyl lysine isopeptide (Lys-Gly) (interchain with G-Cter in SUMO2) linkage. The residue at position 130 (S130) is a Phosphoserine. The tract at residues 150–188 is disordered; it reads RHFGKAPGTPHSHTKPYVRSKGRKFERARGRRASRGYKN. T158 is modified (phosphothreonine). Composition is skewed to basic residues over residues 161–171 and 178–188; these read SHTKPYVRSKG and RGRRASRGYKN. K164 is covalently cross-linked (Glycyl lysine isopeptide (Lys-Gly) (interchain with G-Cter in SUMO2)).

The protein belongs to the eukaryotic ribosomal protein eL18 family. Component of the large ribosomal subunit.

The protein resides in the cytoplasm. The protein localises to the cytosol. Its subcellular location is the rough endoplasmic reticulum. In terms of biological role, component of the large ribosomal subunit. The ribosome is a large ribonucleoprotein complex responsible for the synthesis of proteins in the cell. The protein is Large ribosomal subunit protein eL18 (Rpl18) of Rattus norvegicus (Rat).